The following is a 753-amino-acid chain: Photosystem I P700 chlorophyll a apoprotein A1 (753 aa).

The next 8 helical transmembrane spans lie at 72 to 95 (IFSA…FHGA), 158 to 181 (LYCT…FHYH), 197 to 221 (MNHH…HVSL), 293 to 311 (TAHH…GHMY), 350 to 373 (WHAQ…HHMY), 389 to 415 (LSLF…IFMV), 437 to 459 (AIIS…LYVH), and 534 to 552 (FMVH…LILL). Residues Cys-576 and Cys-585 each contribute to the [4Fe-4S] cluster site. The next 2 helical transmembrane spans lie at 592-613 (HVFL…HFSW) and 667-689 (LSAY…MFLF). Residue His-678 participates in chlorophyll a' binding. The chlorophyll a site is built by Met-686 and Tyr-694. Residue Trp-695 coordinates phylloquinone. The helical transmembrane segment at 727-747 (AVGVAHYLLGGIVTTWAFFLA) threads the bilayer.

The protein belongs to the PsaA/PsaB family. As to quaternary structure, the PsaA/B heterodimer binds the P700 chlorophyll special pair and subsequent electron acceptors. PSI consists of a core antenna complex that captures photons, and an electron transfer chain that converts photonic excitation into a charge separation. The cyanobacterial PSI reaction center is composed of one copy each of PsaA,B,C,D,E,F,I,J,K,L,M and X, and forms trimeric complexes. The cofactor is PSI electron transfer chain: 5 chlorophyll a, 1 chlorophyll a', 2 phylloquinones and 3 4Fe-4S clusters. PSI core antenna: 90 chlorophyll a, 22 carotenoids, 3 phospholipids and 1 galactolipid. P700 is a chlorophyll a/chlorophyll a' dimer, A0 is one or more chlorophyll a, A1 is one or both phylloquinones and FX is a shared 4Fe-4S iron-sulfur center..

It localises to the cellular thylakoid membrane. It carries out the reaction reduced [plastocyanin] + hnu + oxidized [2Fe-2S]-[ferredoxin] = oxidized [plastocyanin] + reduced [2Fe-2S]-[ferredoxin]. Functionally, psaA and PsaB bind P700, the primary electron donor of photosystem I (PSI), as well as the electron acceptors A0, A1 and FX. PSI is a plastocyanin/cytochrome c6-ferredoxin oxidoreductase, converting photonic excitation into a charge separation, which transfers an electron from the donor P700 chlorophyll pair to the spectroscopically characterized acceptors A0, A1, FX, FA and FB in turn. Oxidized P700 is reduced on the lumenal side of the thylakoid membrane by plastocyanin or cytochrome c6. This Trichodesmium erythraeum (strain IMS101) protein is Photosystem I P700 chlorophyll a apoprotein A1.